The chain runs to 213 residues: N-(5'-phosphoribosyl)anthranilate isomerase (213 aa).

This sequence belongs to the TrpF family.

It carries out the reaction N-(5-phospho-beta-D-ribosyl)anthranilate = 1-(2-carboxyphenylamino)-1-deoxy-D-ribulose 5-phosphate. The protein operates within amino-acid biosynthesis; L-tryptophan biosynthesis; L-tryptophan from chorismate: step 3/5. This Caulobacter sp. (strain K31) protein is N-(5'-phosphoribosyl)anthranilate isomerase.